The sequence spans 351 residues: Apolipoprotein L4 (351 aa).

The N-terminal stretch at 1-21 (MEGAALLKIFVVCIWVQQNHP) is a signal peptide.

The protein belongs to the apolipoprotein L family. Widely expressed; the highest levels are in spinal cord, placenta, adrenal gland; also detected in spleen, bone marrow, uterus, trachea, mammary gland and testis; levels are low in brain, heart and pancreas.

The protein localises to the secreted. Its function is as follows. May play a role in lipid exchange and transport throughout the body. May participate in reverse cholesterol transport from peripheral cells to the liver. The polypeptide is Apolipoprotein L4 (APOL4) (Homo sapiens (Human)).